Here is a 112-residue protein sequence, read N- to C-terminus: uncharacterized protein (112 aa).

Transmembrane regions (helical) follow at residues 33–53 (PSPL…PFGA), 58–78 (LYIY…NVCT), and 91–111 (CVYV…LLFV).

The protein resides in the membrane. This is an uncharacterized protein from Saccharomyces cerevisiae (strain ATCC 204508 / S288c) (Baker's yeast).